The sequence spans 304 residues: D-alanine--D-alanine ligase (304 aa).

Positions 103–301 constitute an ATP-grasp domain; that stretch reads KQVWLALGLP…FDDLVWRILE (199 aa). 132–187 provides a ligand contact to ATP; it reads VEMLGFPVIIKPAKEGSSVGVSRVFALEHLEEAVALAARYEGELLMEQLIEGDELT. Positions 254, 268, and 270 each coordinate Mg(2+).

Belongs to the D-alanine--D-alanine ligase family. It depends on Mg(2+) as a cofactor. Mn(2+) is required as a cofactor.

The protein localises to the cytoplasm. It carries out the reaction 2 D-alanine + ATP = D-alanyl-D-alanine + ADP + phosphate + H(+). It participates in cell wall biogenesis; peptidoglycan biosynthesis. Cell wall formation. This is D-alanine--D-alanine ligase from Xylella fastidiosa (strain Temecula1 / ATCC 700964).